Reading from the N-terminus, the 647-residue chain is DNA ligase (647 aa).

NAD(+)-binding positions include 30-34 (DEEYD), 79-80 (SM), and E106. K108 acts as the N6-AMP-lysine intermediate in catalysis. The NAD(+) site is built by R129, E163, and K301. 4 residues coordinate Zn(2+): C395, C398, C411, and C416. The 79-residue stretch at 569-647 (SISNALSGKT…SEYERLKLEV (79 aa)) folds into the BRCT domain.

The protein belongs to the NAD-dependent DNA ligase family. LigA subfamily. Mg(2+) serves as cofactor. It depends on Mn(2+) as a cofactor.

The enzyme catalyses NAD(+) + (deoxyribonucleotide)n-3'-hydroxyl + 5'-phospho-(deoxyribonucleotide)m = (deoxyribonucleotide)n+m + AMP + beta-nicotinamide D-nucleotide.. In terms of biological role, DNA ligase that catalyzes the formation of phosphodiester linkages between 5'-phosphoryl and 3'-hydroxyl groups in double-stranded DNA using NAD as a coenzyme and as the energy source for the reaction. It is essential for DNA replication and repair of damaged DNA. The protein is DNA ligase of Campylobacter concisus (strain 13826).